The sequence spans 79 residues: DNA-directed RNA polymerase subunit omega (79 aa).

This sequence belongs to the RNA polymerase subunit omega family. In terms of assembly, in cyanobacteria the RNAP catalytic core is composed of 2 alpha, 1 beta, 1 beta', 1 gamma and 1 omega subunit. When a sigma factor is associated with the core the holoenzyme is formed, which can initiate transcription.

It carries out the reaction RNA(n) + a ribonucleoside 5'-triphosphate = RNA(n+1) + diphosphate. Its function is as follows. Promotes RNA polymerase assembly. Latches the N- and C-terminal regions of the beta' subunit thereby facilitating its interaction with the beta and alpha subunits. This is DNA-directed RNA polymerase subunit omega from Synechococcus sp. (strain JA-2-3B'a(2-13)) (Cyanobacteria bacterium Yellowstone B-Prime).